Here is a 597-residue protein sequence, read N- to C-terminus: Elongation factor 4 (597 aa).

The 183-residue stretch at 2–184 folds into the tr-type G domain; that stretch reads KNIRNFSIIA…TMIAKIPPPV (183 aa). GTP-binding positions include 14-19 and 131-134; these read DHGKST and NKID.

It belongs to the TRAFAC class translation factor GTPase superfamily. Classic translation factor GTPase family. LepA subfamily.

Its subcellular location is the cell inner membrane. It catalyses the reaction GTP + H2O = GDP + phosphate + H(+). Required for accurate and efficient protein synthesis under certain stress conditions. May act as a fidelity factor of the translation reaction, by catalyzing a one-codon backward translocation of tRNAs on improperly translocated ribosomes. Back-translocation proceeds from a post-translocation (POST) complex to a pre-translocation (PRE) complex, thus giving elongation factor G a second chance to translocate the tRNAs correctly. Binds to ribosomes in a GTP-dependent manner. This chain is Elongation factor 4, found in Methylobacillus flagellatus (strain ATCC 51484 / DSM 6875 / VKM B-1610 / KT).